A 354-amino-acid polypeptide reads, in one-letter code: GTPase Obg (354 aa).

The Obg domain occupies 1-159 (MQFIDHAEIE…KQLRLELKLL (159 aa)). The 169-residue stretch at 160 to 328 (AEVGIIGLPN…LLQEIWDVLD (169 aa)) folds into the OBG-type G domain. Residues 166–173 (GLPNAGKS), 191–195 (FTTLI), 213–216 (DIPG), 280–283 (NKLD), and 309–311 (SAV) contribute to the GTP site. The Mg(2+) site is built by Ser-173 and Thr-193.

This sequence belongs to the TRAFAC class OBG-HflX-like GTPase superfamily. OBG GTPase family. As to quaternary structure, monomer. Mg(2+) is required as a cofactor.

The protein resides in the cytoplasm. An essential GTPase which binds GTP, GDP and possibly (p)ppGpp with moderate affinity, with high nucleotide exchange rates and a fairly low GTP hydrolysis rate. Plays a role in control of the cell cycle, stress response, ribosome biogenesis and in those bacteria that undergo differentiation, in morphogenesis control. The sequence is that of GTPase Obg from Picosynechococcus sp. (strain ATCC 27264 / PCC 7002 / PR-6) (Agmenellum quadruplicatum).